The primary structure comprises 545 residues: MSRYRFRKARSNWPMGQNDSRWEPPPVRLNELVTATEPEEIPLPKLEDQPYEGGPLNMTGFMYHPRTKKYYKMTQDPTMPQGFSKSDLDRMEKAREAKFQANRPRFTSGSFIQRPVFKPITTLMDDLTLGRCTMARVERHIHESRLLNCNPKPSFTIKTPIEHYDVSGCEFLDVSETGDRIVGTFTVNPNGVAAKHSAVYVFEVDSIGDTIQSESSRREAYQLLPIRSRSNNAGFNTLGLTVRPMLRDDGFSDEPSYLDYAVTRYNSFIVDQTLARVDADVTCMLTVTANDTITRNGNVCSYCTVHLEPLAELSDPEAMPTLNSPIYNKSWREKGNIWSVGWNAPQMSIGFGLESCFRVENLLTDRSFLMSSRKRNVLNHCFSADGNLVYMGLRNDNVIKSDLRMNRDHITGQLNGACNTTFVRVLEKTRPECVVTEGFDSIIRIWDFRWPKNPMMEMHGHSNNCNRLNVFFDKEERFVFAAGSDGYVRGWSLTSGDMLCSVKTPNHSNPIFPRAVYSDCWGGRPGNSAIIMAVGDSMRVHSLEL.

The segment covering 1–10 has biased composition (basic residues); the sequence is MSRYRFRKAR. The segment at 1–25 is disordered; sequence MSRYRFRKARSNWPMGQNDSRWEPP. WD repeat units follow at residues 417 to 456 and 460 to 501; these read ACNTTFVRVLEKTRPECVVTEGFDSIIRIWDFRWPKNPMM and GHSN…MLCS.

This is an uncharacterized protein from Caenorhabditis elegans.